Reading from the N-terminus, the 234-residue chain is Mannose/glucose-specific lectin Cramoll (234 aa).

Positions 8 and 10 each coordinate Mn(2+). D10, Y12, N14, and D19 together coordinate Ca(2+). Residue Y12 coordinates a carbohydrate. 3 residues coordinate Mn(2+): D19, H24, and S34. Residue 99–100 coordinates a carbohydrate; the sequence is LY. Residue D205 participates in Ca(2+) binding. Position 225 (R225) interacts with a carbohydrate.

The protein belongs to the leguminous lectin family. As to quaternary structure, homotetramer. Post-translationally, the alpha and beta chains are produced by partial proteolytic processing of the lectin precursor by an asparaginyl endopeptidase.

Its function is as follows. Glucose/D-mannose specific lectin. The chain is Mannose/glucose-specific lectin Cramoll from Cratylia mollis (Camaratu bean).